A 353-amino-acid chain; its full sequence is Histidinol-phosphate aminotransferase (353 aa).

Lysine 218 is modified (N6-(pyridoxal phosphate)lysine).

Belongs to the class-II pyridoxal-phosphate-dependent aminotransferase family. Histidinol-phosphate aminotransferase subfamily. In terms of assembly, homodimer. Pyridoxal 5'-phosphate is required as a cofactor.

It catalyses the reaction L-histidinol phosphate + 2-oxoglutarate = 3-(imidazol-4-yl)-2-oxopropyl phosphate + L-glutamate. The protein operates within amino-acid biosynthesis; L-histidine biosynthesis; L-histidine from 5-phospho-alpha-D-ribose 1-diphosphate: step 7/9. The polypeptide is Histidinol-phosphate aminotransferase (Synechococcus sp. (strain JA-2-3B'a(2-13)) (Cyanobacteria bacterium Yellowstone B-Prime)).